Consider the following 481-residue polypeptide: tRNA-2-methylthio-N(6)-dimethylallyladenosine synthase (481 aa).

Residues 24–140 (KKLFIESYGC…LPNLLAEVEE (117 aa)) form the MTTase N-terminal domain. 6 residues coordinate [4Fe-4S] cluster: C33, C69, C103, C178, C182, and C185. The Radical SAM core domain maps to 164 to 411 (MSNGITALVS…DLQQKHAWFR (248 aa)). Residues 413 to 476 (EEFVGKTVEV…SGTLKGEAVG (64 aa)) form the TRAM domain.

Belongs to the methylthiotransferase family. MiaB subfamily. As to quaternary structure, monomer. Requires [4Fe-4S] cluster as cofactor.

It is found in the cytoplasm. The catalysed reaction is N(6)-dimethylallyladenosine(37) in tRNA + (sulfur carrier)-SH + AH2 + 2 S-adenosyl-L-methionine = 2-methylsulfanyl-N(6)-dimethylallyladenosine(37) in tRNA + (sulfur carrier)-H + 5'-deoxyadenosine + L-methionine + A + S-adenosyl-L-homocysteine + 2 H(+). In terms of biological role, catalyzes the methylthiolation of N6-(dimethylallyl)adenosine (i(6)A), leading to the formation of 2-methylthio-N6-(dimethylallyl)adenosine (ms(2)i(6)A) at position 37 in tRNAs that read codons beginning with uridine. The protein is tRNA-2-methylthio-N(6)-dimethylallyladenosine synthase of Flavobacterium johnsoniae (strain ATCC 17061 / DSM 2064 / JCM 8514 / BCRC 14874 / CCUG 350202 / NBRC 14942 / NCIMB 11054 / UW101) (Cytophaga johnsonae).